The chain runs to 130 residues: Arsenical-resistance protein 2 (130 aa).

Residues Q17 to L124 form the Rhodanese domain.

In terms of biological role, involved in resistance to arsenic compounds. This is Arsenical-resistance protein 2 (ARR2) from Saccharomyces cerevisiae (strain ATCC 204508 / S288c) (Baker's yeast).